Here is a 78-residue protein sequence, read N- to C-terminus: DNA-directed RNA polymerase subunit Rpo5 (78 aa).

This sequence belongs to the archaeal Rpo5/eukaryotic RPB5 RNA polymerase subunit family. In terms of assembly, part of the RNA polymerase complex.

The protein localises to the cytoplasm. The enzyme catalyses RNA(n) + a ribonucleoside 5'-triphosphate = RNA(n+1) + diphosphate. Its function is as follows. DNA-dependent RNA polymerase (RNAP) catalyzes the transcription of DNA into RNA using the four ribonucleoside triphosphates as substrates. The polypeptide is DNA-directed RNA polymerase subunit Rpo5 (Methanothrix thermoacetophila (strain DSM 6194 / JCM 14653 / NBRC 101360 / PT) (Methanosaeta thermophila)).